Reading from the N-terminus, the 507-residue chain is Maturase K (507 aa).

Belongs to the intron maturase 2 family. MatK subfamily.

The protein resides in the plastid. It localises to the chloroplast. Functionally, usually encoded in the trnK tRNA gene intron. Probably assists in splicing its own and other chloroplast group II introns. The sequence is that of Maturase K from Cananga odorata (Ylang-ylang tree).